A 579-amino-acid chain; its full sequence is Extracellular serine/threonine protein kinase FAM20C (579 aa).

The Cytoplasmic portion of the chain corresponds to M1 to R10. Positions M1–Q87 are excised as a propeptide. The chain crosses the membrane as a helical; Signal-anchor for type II membrane protein span at residues V11–P31. The Lumenal segment spans residues K32–R579. A disordered region spans residues T38–N79. Positions A49–A63 are enriched in low complexity. An N-linked (GlcNAc...) asparagine glycan is attached at N96. The disordered stretch occupies residues K104 to L155. Composition is skewed to basic and acidic residues over residues P111–E120 and D128–P140. Positions 264, 280, and 301 each coordinate ATP. Position 301 (E301) interacts with Mn(2+). Residues F349–G560 form a kinase domain region. 2 disulfides stabilise this stretch: C357–C373 and C362–C366. Position 384–387 (A384–L387) interacts with ATP. Intrachain disulfides connect C421-C495 and C496-C555. The active site involves D453. ATP-binding residues include E458 and D473. Residue D473 participates in Mn(2+) binding.

This sequence belongs to the FAM20 family. In terms of assembly, homodimer; disulfide-linked. Interacts with FAM20A; probably forming a heterotetramer of 2 subunits of FAM20A and 2 subunits of FAM20C. Interacts with COPII components SEC23A and SEC24A; transport of FAM20C from the endoplasmic reticulum to the Golgi is likely to be mediated by COPII vesicles. It depends on Mn(2+) as a cofactor. In terms of processing, N-glycosylation is required for folding. Post-translationally, autophosphorylated. Propeptide cleavage by MBTPS1/S1P promotes FAM20C secretion and maximal kinase activity which is essential for efficient osteoblast differentiation and biomineralization. As to expression, in the mammary gland, expressed at higher levels in lactating mice than in virgin mice (at protein level). Highly expressed in the tooth. No expression in the dental pulp. At the secretory stage of amelogenesis, it is detected in the matrix of the enamel, in the ameloblasts, and within the cells adjoining the stratum intermedium (a tissue layer analogous to the stellate reticulum seen in the developing molar). Strong expression is observed in maturation stage ameloblasts and throughout the non-cornified layers of the gingival epithelium. Expressed at moderate levels in bone and at low levels in kidney, liver, brain and lung. Very low expression, if any, in spleen and skeletal muscle.

The protein resides in the golgi apparatus membrane. Its subcellular location is the secreted. It is found in the endoplasmic reticulum. The catalysed reaction is L-seryl-[protein] + ATP = O-phospho-L-seryl-[protein] + ADP + H(+). It carries out the reaction L-threonyl-[protein] + ATP = O-phospho-L-threonyl-[protein] + ADP + H(+). Its activity is regulated as follows. Serine/threonine protein kinase activity is increased upon interaction with FAM20A. In terms of biological role, golgi serine/threonine protein kinase that phosphorylates secretory pathway proteins within Ser-x-Glu/pSer motifs and plays a key role in biomineralization of bones and teeth. Constitutes the main protein kinase for extracellular proteins, generating the majority of the extracellular phosphoproteome. Mainly phosphorylates proteins within the Ser-x-Glu/pSer motif, but also displays a broader substrate specificity. Phosphorylates ERO1A, enhancing its activity which is required to maintain endoplasmic reticulum redox homeostasis and for oxidative protein folding. During endoplasmic reticulum stress, phosphorylates P4HB/PDIA1 which induces a functional switch, causing P4HB to change from an oxidoreductase to a molecular chaperone. This is critical to maintain ER proteostasis and reduce cell death under ER stress. Phosphorylation of P4HB also promotes its interaction with ERN1, leading to reduced activity of ERN1, a key sensor for the endoplasmic reticulum unfolded protein response. Required for osteoblast differentiation and mineralization. Phosphorylates casein as well as a number of proteins involved in biomineralization such as AMELX, AMTN, ENAM and SPP1. In addition to its role in biomineralization, also plays a role in lipid homeostasis, wound healing and cell migration and adhesion. The polypeptide is Extracellular serine/threonine protein kinase FAM20C (Mus musculus (Mouse)).